Here is a 318-residue protein sequence, read N- to C-terminus: Ribosomal RNA small subunit methyltransferase H (318 aa).

S-adenosyl-L-methionine contacts are provided by residues 37-39, aspartate 57, phenylalanine 83, aspartate 104, and glutamine 111; that span reads GGH.

This sequence belongs to the methyltransferase superfamily. RsmH family.

It is found in the cytoplasm. The catalysed reaction is cytidine(1402) in 16S rRNA + S-adenosyl-L-methionine = N(4)-methylcytidine(1402) in 16S rRNA + S-adenosyl-L-homocysteine + H(+). Functionally, specifically methylates the N4 position of cytidine in position 1402 (C1402) of 16S rRNA. In Neisseria gonorrhoeae (strain NCCP11945), this protein is Ribosomal RNA small subunit methyltransferase H.